The primary structure comprises 215 residues: Pyridoxine/pyridoxamine 5'-phosphate oxidase (215 aa).

Substrate contacts are provided by residues 9 to 12 and Lys-69; that span reads RRDY. Residues 64–69, 79–80, Lys-86, and Gln-108 contribute to the FMN site; these read RVLLLK and FT. Substrate contacts are provided by Tyr-126, Arg-130, and Ser-134. FMN contacts are provided by residues 143–144 and Trp-188; that span reads QS. A substrate-binding site is contributed by 194–196; the sequence is RLH. Arg-198 lines the FMN pocket.

The protein belongs to the pyridoxamine 5'-phosphate oxidase family. As to quaternary structure, homodimer. The cofactor is FMN.

It catalyses the reaction pyridoxamine 5'-phosphate + O2 + H2O = pyridoxal 5'-phosphate + H2O2 + NH4(+). The catalysed reaction is pyridoxine 5'-phosphate + O2 = pyridoxal 5'-phosphate + H2O2. The protein operates within cofactor metabolism; pyridoxal 5'-phosphate salvage; pyridoxal 5'-phosphate from pyridoxamine 5'-phosphate: step 1/1. It participates in cofactor metabolism; pyridoxal 5'-phosphate salvage; pyridoxal 5'-phosphate from pyridoxine 5'-phosphate: step 1/1. Functionally, catalyzes the oxidation of either pyridoxine 5'-phosphate (PNP) or pyridoxamine 5'-phosphate (PMP) into pyridoxal 5'-phosphate (PLP). The polypeptide is Pyridoxine/pyridoxamine 5'-phosphate oxidase (Pseudomonas syringae pv. tomato (strain ATCC BAA-871 / DC3000)).